Reading from the N-terminus, the 359-residue chain is Putative mannose-1-phosphate guanyltransferase (359 aa).

This sequence belongs to the transferase hexapeptide repeat family.

It carries out the reaction alpha-D-mannose 1-phosphate + GTP + H(+) = GDP-alpha-D-mannose + diphosphate. The polypeptide is Putative mannose-1-phosphate guanyltransferase (mpg1) (Sulfolobus acidocaldarius (strain ATCC 33909 / DSM 639 / JCM 8929 / NBRC 15157 / NCIMB 11770)).